The primary structure comprises 679 residues: G-protein-signaling modulator 2 (679 aa).

Residues 22–357 (ASCLELALEG…HLEISREVGD (336 aa)) form an important for interaction with NUMA1; INSC and FRMPD1 region. TPR repeat units follow at residues 24–57 (CLEL…GTED), 62–95 (SAIY…ARTI), 102–135 (AKAS…SREL), 142–184 (ARAL…AVDL), 202–235 (GRAF…AKEF), 242–275 (RRAY…ARQL), 282–315 (AQSC…AQEL), and 322–355 (GRAC…SREV). Phosphoserine is present on residues S408 and S484. T487 carries the post-translational modification Phosphothreonine. One can recognise a GoLoco 1 domain in the interval 490–512 (DEGFFDLLRRFQSNRMDDQRCHL). S540 and S564 each carry phosphoserine. 3 consecutive GoLoco domains span residues 543 to 565 (TDEF…RASF), 594 to 616 (DEDF…RCAP), and 628 to 650 (DEDF…RVLL). GDP-binding residues include R608, R613, R642, and R647.

Belongs to the GPSM family. In terms of assembly, interacts with the dynein-dynactin complex; this interaction is inhibited in a PLK1-dependent manner. Part of a spindle orientation complex at least composed of GNAI1, GPSM2 and NUMA1. Interacts with LLGL2. Interacts (via TPR repeat region) with INSC/inscuteable. Interacts (via TPR repeat region) with NUMA1 (via C-terminus); this interaction is direct, inhibited in a PLK1-dependent manner and promotes spindle pole organization. INSC and NUMA1 compete for the same binding site, but INSC has higher affinity and can displace NUMA1 (in vitro). Interacts with GNAI2. Interacts (via GoLoco domains) with the GDP-bound form of GNAI1 and GNAI3; has much lower affinity for the GTP-bound form. Interaction with GDP-bound GNAI3 strongly enhances the affinity for NUMA1. Interacts (via TPR repeat region) with FRMPD1. INSC and FRMPD1 compete for the same binding site, but INSC has higher affinity and can displace FRMPD1 (in vitro). Interacts (via TPR repeat region) with FRMPD4. Identified in a complex with INSC and F2RL2/Par3. Interacts with TASOR. In terms of tissue distribution, detected in brain and liver (at protein level). Detected in brain, spleen, liver and testis, and at lower levels in heart, lung and kidney. Enriched in the ventricular zone of the developing central nervous systems. Expressed in proximal colon, ileum, ovary, Sertoli cells of the testis and granular cells within the cerebellum.

Its subcellular location is the cytoplasm. The protein resides in the cell cortex. It localises to the cytoskeleton. The protein localises to the spindle pole. It is found in the lateral cell membrane. Its function is as follows. Plays an important role in mitotic spindle pole organization via its interaction with NUMA1. Required for cortical dynein-dynactin complex recruitment during metaphase. Plays a role in metaphase spindle orientation. Plays an important role in asymmetric cell divisions. Has guanine nucleotide dissociation inhibitor (GDI) activity towards G(i) alpha proteins, such as GNAI1 and GNAI3, and thereby regulates their activity. This Mus musculus (Mouse) protein is G-protein-signaling modulator 2 (Gpsm2).